The following is a 683-amino-acid chain: MSTRREMRAEAQAFIDNLKPLQHPNSQKFYLNGSRPDLKVAMRQIYQSDTLIGGTAEAPVYEKNPPITVYDCAGPYSDPEADIDVRRGLVKLRSEWIAERSDTQELEQVSSGFTQQRLADEGLDHLRFEQLPKPRRALEGRVVTQMHYARRGIITPEMEYVALRENMARETVTEEVLNQRAPGESFGAKLGEPITPEFVRQELAAGRAILPLNINHPEAEPMIIGRNFLVKVNANIGNSAVTSSIEEEVEKLVWATRWGADTVMDLSTGRYIHETREWIIRNSPVPIGTVPIYQALEKVNGIAEDLTWEIFRDTLIEQAEQGVDYFTIHAGVLLRYVPMTAKRLTGIVSRGGSIMAKWCLSHHKENFLYEHFDEICQLCAAYDVSLSLGDGMRPGSIADANDEAQFAELETLGELVKKAWQYDVQTIIEGPGHIPMQLIKENMDKQLELCDEAPFYTLGPQTTDIAPGYDHFTSGIGAAMIAWYGCAMLCYVTPKEHLGLPNKEDVKQGLIAYKIAAHAGDVAKGHPGAQIRDNALSKARFEFRWEDQYNLGLDPDTARAYHDESLPQESAKVAHFCSMCGPKFCSMKITQEVREYAAAQATDVREIEVEQIDVTASAPKADIQQGMAQMSAQFKQSGSELYHSAIRQSPGVESTSLESTSLESTVLESTSLESTALEKAKEV.

Substrate is bound by residues Asn-235, Met-264, Tyr-293, His-329, Ser-349–Gly-351, Asp-390–Arg-393, and Glu-429. Residue His-433 participates in Zn(2+) binding. Position 456 (Tyr-456) interacts with substrate. Residue His-497 coordinates Zn(2+). [4Fe-4S] cluster is bound by residues Cys-577, Cys-580, and Cys-585. Residues Arg-647–Val-683 are disordered. Over residues Glu-653–Thr-675 the composition is skewed to low complexity.

This sequence belongs to the ThiC family. In terms of assembly, homodimer. [4Fe-4S] cluster is required as a cofactor.

It carries out the reaction 5-amino-1-(5-phospho-beta-D-ribosyl)imidazole + S-adenosyl-L-methionine = 4-amino-2-methyl-5-(phosphooxymethyl)pyrimidine + CO + 5'-deoxyadenosine + formate + L-methionine + 3 H(+). It functions in the pathway cofactor biosynthesis; thiamine diphosphate biosynthesis. In terms of biological role, catalyzes the synthesis of the hydroxymethylpyrimidine phosphate (HMP-P) moiety of thiamine from aminoimidazole ribotide (AIR) in a radical S-adenosyl-L-methionine (SAM)-dependent reaction. In Shewanella loihica (strain ATCC BAA-1088 / PV-4), this protein is Phosphomethylpyrimidine synthase.